We begin with the raw amino-acid sequence, 246 residues long: 3'(2'),5'-bisphosphate nucleotidase CysQ (246 aa).

Mg(2+) is bound by residues Glu64, Asp83, Leu85, Asp86, and Asp205. Residue Glu64 participates in substrate binding. Substrate is bound by residues 85-88 and Asp205; that span reads LDGT.

It belongs to the inositol monophosphatase superfamily. CysQ family. Requires Mg(2+) as cofactor.

The protein resides in the cell inner membrane. The catalysed reaction is adenosine 3',5'-bisphosphate + H2O = AMP + phosphate. With respect to regulation, inhibited by lithium and calcium. Functionally, converts adenosine-3',5'-bisphosphate (PAP) to AMP. May also convert adenosine 3'-phosphate 5'-phosphosulfate (PAPS) to adenosine 5'-phosphosulfate (APS). Has 10000-fold lower activity towards inositol 1,4-bisphosphate (Ins(1,4)P2). The polypeptide is 3'(2'),5'-bisphosphate nucleotidase CysQ (Escherichia coli (strain K12)).